Consider the following 367-residue polypeptide: MPSPLAPMAVFVDLDERSYTVHFDSLATVPSLLEDVGLAAGRCLLVTDENVARHYKTPLIEGLSNAGWTVRSLVLPPGEQTKSASCLHRIYDDALAWGIDRQTPVLALGGGVVGDLAGFAAATLLRGLPLVQLPTSLLAQVDASVGGKTAINHDTGKNLIGAFYQPELVCADPQTLDTLPMREYTSGMAEVIKHALIRAPDLFEALEDHLVPVMARKDREIVSSVIEDAVGVKADVVSADEREEGRRAILNFGHTFAHALERVAGYGAFTHGEAVAIGMRAGLYLSHQRHPEAVPRERLDHVIRAVPIESDPAEVPFPDLYAAMAADKKNEGGTIRFVLLEQLGQAYVTGDVTEADARHAWQFACSN.

NAD(+) is bound by residues G111 to D115, T135 to S136, K148, K157, and T175 to T178. Residues E190, H254, and H271 each contribute to the Zn(2+) site.

The protein belongs to the sugar phosphate cyclases superfamily. Dehydroquinate synthase family. Requires Co(2+) as cofactor. It depends on Zn(2+) as a cofactor. NAD(+) serves as cofactor.

It localises to the cytoplasm. The enzyme catalyses 7-phospho-2-dehydro-3-deoxy-D-arabino-heptonate = 3-dehydroquinate + phosphate. The protein operates within metabolic intermediate biosynthesis; chorismate biosynthesis; chorismate from D-erythrose 4-phosphate and phosphoenolpyruvate: step 2/7. Functionally, catalyzes the conversion of 3-deoxy-D-arabino-heptulosonate 7-phosphate (DAHP) to dehydroquinate (DHQ). In Salinibacter ruber (strain DSM 13855 / M31), this protein is 3-dehydroquinate synthase.